An 88-amino-acid chain; its full sequence is Small ribosomal subunit protein bS20 (88 aa).

Residues 1-16 (MANTHSAKKATRKITR) are compositionally biased toward basic residues. A disordered region spans residues 1 to 20 (MANTHSAKKATRKITRRTAV).

It belongs to the bacterial ribosomal protein bS20 family.

Its function is as follows. Binds directly to 16S ribosomal RNA. In Nitrobacter hamburgensis (strain DSM 10229 / NCIMB 13809 / X14), this protein is Small ribosomal subunit protein bS20.